Here is a 305-residue protein sequence, read N- to C-terminus: Major fimbrium anchoring subunit FimB (305 aa).

The signal sequence occupies residues 1 to 22; that stretch reads MNDAKKYIVSVLILLVAGMFGG. C23 carries N-palmitoyl cysteine lipidation. C23 is lipidated: S-diacylglycerol cysteine.

It belongs to the bacteroidetes fimbrillin superfamily. FimB/Mfa2 family. As to quaternary structure, fimB is not part of the fimbrium itself, but anchors the fimbrium in the outer membrane. Linear, head-to-tail oligomerization of fimbrial subunits mediates assembly of the fimbrium stalk, while the minor components FimC, FimD and FimE probably form the fimbrium tip. The anchoring subunit FimB limits fimbrium length and is important for solid fimbrium attachment to the outer membrane. In its absence, the major fimbriae become very long and are easily detached from the membrane.

Its subcellular location is the cell outer membrane. Its function is as follows. Anchoring subunit of the major fimbriae. Regulates fimbrial length. These filamentous pili are attached to the cell surface; they mediate biofilm formation, adhesion onto host cells and onto other bacteria that are part of the oral microbiome. Fimbriae of P.gingivalis are major virulence factors. The sequence is that of Major fimbrium anchoring subunit FimB from Porphyromonas gingivalis (Bacteroides gingivalis).